Consider the following 1378-residue polypeptide: DNA-directed RNA polymerase subunit beta (1378 aa).

It belongs to the RNA polymerase beta chain family. The RNAP catalytic core consists of 2 alpha, 1 beta, 1 beta' and 1 omega subunit. When a sigma factor is associated with the core the holoenzyme is formed, which can initiate transcription.

The catalysed reaction is RNA(n) + a ribonucleoside 5'-triphosphate = RNA(n+1) + diphosphate. Its function is as follows. DNA-dependent RNA polymerase catalyzes the transcription of DNA into RNA using the four ribonucleoside triphosphates as substrates. This Dinoroseobacter shibae (strain DSM 16493 / NCIMB 14021 / DFL 12) protein is DNA-directed RNA polymerase subunit beta.